The chain runs to 189 residues: Nucleoside diphosphate kinase 6 (189 aa).

Residues K19, F68, R96, T102, R116, and N126 each contribute to the ATP site. H129 acts as the Pros-phosphohistidine intermediate in catalysis.

This sequence belongs to the NDK family. It depends on Mg(2+) as a cofactor.

It catalyses the reaction a 2'-deoxyribonucleoside 5'-diphosphate + ATP = a 2'-deoxyribonucleoside 5'-triphosphate + ADP. The enzyme catalyses a ribonucleoside 5'-diphosphate + ATP = a ribonucleoside 5'-triphosphate + ADP. Major role in the synthesis of nucleoside triphosphates other than ATP. The ATP gamma phosphate is transferred to the NDP beta phosphate via a ping-pong mechanism, using a phosphorylated active-site intermediate. This Mus musculus (Mouse) protein is Nucleoside diphosphate kinase 6 (Nme6).